Consider the following 466-residue polypeptide: Uronate isomerase (466 aa).

Belongs to the metallo-dependent hydrolases superfamily. Uronate isomerase family.

The enzyme catalyses D-glucuronate = D-fructuronate. It carries out the reaction aldehydo-D-galacturonate = keto-D-tagaturonate. The protein operates within carbohydrate metabolism; pentose and glucuronate interconversion. The protein is Uronate isomerase of Streptococcus agalactiae serotype III (strain NEM316).